The primary structure comprises 655 residues: Protein movement modulator (655 aa).

The Extracellular segment spans residues 1-54 (MEQPSILVKILHSIPHVNYTFRRVNDTFNPDSDVYLEPTNNKLQCQQKGIELQS). N-linked (GlcNAc...) asparagine glycosylation is found at Asn18 and Asn25. The chain crosses the membrane as a helical span at residues 55 to 75 (LVILASIPAGLLIGSLLGLLL). The Cytoplasmic segment spans residues 76–95 (YLLTRCCDRRQRKPSAQRCQ). The helical transmembrane segment at 96 to 116 (SCSLVIITLMTCAAIGLGLYG) threads the bilayer. Over 117–231 (NDDFHNGLLQ…GEFYESIRWP (115 aa)) the chain is Extracellular. N-linked (GlcNAc...) asparagine glycans are attached at residues Asn171, Asn188, and Asn211. A helical membrane pass occupies residues 232-252 (ATLAFLTVLLLLCTVLVIGVA). Residues 253–258 (RRSRCT) lie on the Cytoplasmic side of the membrane. The chain crosses the membrane as a helical span at residues 259–279 (LIFFSVSGLFCIIICWLLAGV). Residues 280–401 (YLASSVAAGD…ALRGLCGGGL (122 aa)) lie on the Extracellular side of the membrane. N-linked (GlcNAc...) asparagine glycosylation is found at Asn326 and Asn372. A helical transmembrane segment spans residues 402-422 (LGLSLMMVAGLLTSFLLTILV). The Cytoplasmic portion of the chain corresponds to 423 to 655 (YADSHAWIYL…CKTLESNDFY (233 aa)). Residues 446 to 576 (APLFPASNAP…NNHYNNTQHR (131 aa)) are disordered. The span at 450–464 (PASNAPSASISPTAP) shows a compositional bias: low complexity. A compositionally biased stretch (polar residues) spans 465 to 480 (LSTGTINRTLLHHQQA). Positions 482–509 (SGGGSGTLPGSGGGAGAGGGVGANGHNG) are enriched in gly residues. Low complexity-rich tracts occupy residues 526–539 (SPSSQSSHTSSTAT) and 546–576 (SYHNSHQQHNNHLYSNHYSHSNNHYNNTQHR). 2 positions are modified to phosphoserine: Ser597 and Ser599.

The protein belongs to the tweety family.

It localises to the cell membrane. It carries out the reaction chloride(in) = chloride(out). Its function is as follows. Probable large-conductance Ca(2+)-activated chloride channel. Modulator of embryonic movement. The polypeptide is Protein movement modulator (Drosophila melanogaster (Fruit fly)).